A 372-amino-acid polypeptide reads, in one-letter code: Pyrimidine monooxygenase RutA (372 aa).

Residues 57 to 58, Asn-123, Glu-132, 148 to 149, and Ser-198 each bind FMN; these read IK and RY.

It belongs to the NtaA/SnaA/DszA monooxygenase family. RutA subfamily.

It carries out the reaction uracil + FMNH2 + NADH + O2 = (Z)-3-ureidoacrylate + FMN + NAD(+) + H2O + H(+). The catalysed reaction is thymine + FMNH2 + NADH + O2 = (Z)-2-methylureidoacrylate + FMN + NAD(+) + H2O + H(+). Its function is as follows. Catalyzes the pyrimidine ring opening between N-3 and C-4 by an unusual flavin hydroperoxide-catalyzed mechanism, adding oxygen atoms in the process to yield ureidoacrylate peracid, that immediately reacts with FMN forming ureidoacrylate and FMN-N(5)-oxide. The FMN-N(5)-oxide reacts spontaneously with NADH to produce FMN. Requires the flavin reductase RutF to regenerate FMN in vivo. This Methylorubrum extorquens (strain PA1) (Methylobacterium extorquens) protein is Pyrimidine monooxygenase RutA.